The following is a 248-amino-acid chain: MSTSVPTKNDVLVPETLLKKRKSQEKARAERQAEIEKKKAANKEKRAVIFKRAETYVKEYRDVEREKIRLQRAAKQDGSFHIPAEAKLIFLIRIKGINKIPPKPRKILQLLRLLQINNGVFVRVTKATAEMIKIVEPWVAYGYPNLKSVKELIYKRGYGKVNKQRVALTDNSIIEENLGKYGIICMEDLIHEIYTVGPNFKQASNFLWPFKLSNPTGGFRTRKFKHFIEGGDLGNREEHINALIRQMN.

A disordered region spans residues 22-42 (KSQEKARAERQAEIEKKKAAN). A compositionally biased stretch (basic and acidic residues) spans 24–42 (QEKARAERQAEIEKKKAAN).

The protein belongs to the universal ribosomal protein uL30 family. Component of the large ribosomal subunit (LSU). Mature N.crassa ribosomes consist of a small (40S) and a large (60S) subunit. The 40S small subunit contains 1 molecule of ribosomal RNA (18S rRNA) and at least 32 different proteins. The large 60S subunit contains 3 rRNA molecules (26S, 5.8S and 5S rRNA) and at least 42 different proteins.

The protein resides in the cytoplasm. Its function is as follows. Component of the ribosome, a large ribonucleoprotein complex responsible for the synthesis of proteins in the cell. The small ribosomal subunit (SSU) binds messenger RNAs (mRNAs) and translates the encoded message by selecting cognate aminoacyl-transfer RNA (tRNA) molecules. The large subunit (LSU) contains the ribosomal catalytic site termed the peptidyl transferase center (PTC), which catalyzes the formation of peptide bonds, thereby polymerizing the amino acids delivered by tRNAs into a polypeptide chain. The nascent polypeptides leave the ribosome through a tunnel in the LSU and interact with protein factors that function in enzymatic processing, targeting, and the membrane insertion of nascent chains at the exit of the ribosomal tunnel. The chain is Large ribosomal subunit protein uL30 (rpl-7) from Neurospora crassa (strain ATCC 24698 / 74-OR23-1A / CBS 708.71 / DSM 1257 / FGSC 987).